A 477-amino-acid chain; its full sequence is Bifunctional protein HldE (477 aa).

A ribokinase region spans residues 1 to 318 (MKVNLPAFER…ENAVRGRAAT (318 aa)). 195 to 198 (NLSE) serves as a coordination point for ATP. Residue D264 is part of the active site. The segment at 344–477 (MTNGVFDILH…IKKIQTESEK (134 aa)) is cytidylyltransferase.

The protein in the N-terminal section; belongs to the carbohydrate kinase PfkB family. It in the C-terminal section; belongs to the cytidylyltransferase family. As to quaternary structure, homodimer.

The catalysed reaction is D-glycero-beta-D-manno-heptose 7-phosphate + ATP = D-glycero-beta-D-manno-heptose 1,7-bisphosphate + ADP + H(+). The enzyme catalyses D-glycero-beta-D-manno-heptose 1-phosphate + ATP + H(+) = ADP-D-glycero-beta-D-manno-heptose + diphosphate. It functions in the pathway nucleotide-sugar biosynthesis; ADP-L-glycero-beta-D-manno-heptose biosynthesis; ADP-L-glycero-beta-D-manno-heptose from D-glycero-beta-D-manno-heptose 7-phosphate: step 1/4. It participates in nucleotide-sugar biosynthesis; ADP-L-glycero-beta-D-manno-heptose biosynthesis; ADP-L-glycero-beta-D-manno-heptose from D-glycero-beta-D-manno-heptose 7-phosphate: step 3/4. Catalyzes the phosphorylation of D-glycero-D-manno-heptose 7-phosphate at the C-1 position to selectively form D-glycero-beta-D-manno-heptose-1,7-bisphosphate. Its function is as follows. Catalyzes the ADP transfer from ATP to D-glycero-beta-D-manno-heptose 1-phosphate, yielding ADP-D-glycero-beta-D-manno-heptose. The sequence is that of Bifunctional protein HldE from Salmonella arizonae (strain ATCC BAA-731 / CDC346-86 / RSK2980).